A 418-amino-acid polypeptide reads, in one-letter code: Serine--tRNA ligase (418 aa).

L-serine is bound at residue 228–230; sequence TSE. ATP-binding positions include 258 to 260 and Val-274; that span reads RKE. Residue Glu-281 participates in L-serine binding. ATP is bound at residue 345-348; sequence EVVS. Thr-381 serves as a coordination point for L-serine.

This sequence belongs to the class-II aminoacyl-tRNA synthetase family. Type-1 seryl-tRNA synthetase subfamily. In terms of assembly, homodimer. The tRNA molecule binds across the dimer.

Its subcellular location is the cytoplasm. It catalyses the reaction tRNA(Ser) + L-serine + ATP = L-seryl-tRNA(Ser) + AMP + diphosphate + H(+). The enzyme catalyses tRNA(Sec) + L-serine + ATP = L-seryl-tRNA(Sec) + AMP + diphosphate + H(+). It participates in aminoacyl-tRNA biosynthesis; selenocysteinyl-tRNA(Sec) biosynthesis; L-seryl-tRNA(Sec) from L-serine and tRNA(Sec): step 1/1. Functionally, catalyzes the attachment of serine to tRNA(Ser). Is also able to aminoacylate tRNA(Sec) with serine, to form the misacylated tRNA L-seryl-tRNA(Sec), which will be further converted into selenocysteinyl-tRNA(Sec). The sequence is that of Serine--tRNA ligase from Cenarchaeum symbiosum (strain A).